Reading from the N-terminus, the 464-residue chain is 26S proteasome regulatory subunit 7 homolog B (464 aa).

An ATP-binding site is contributed by 246 to 253 (GPPGSGKT). A Glycyl lysine isopeptide (Lys-Gly) (interchain with G-Cter in ubiquitin) cross-link involves residue K452.

This sequence belongs to the AAA ATPase family. Component of the 19S regulatory particle (RP/PA700) base subcomplex of the 26S proteasome. The 26S proteasome is composed of a core protease (CP), known as the 20S proteasome, capped at one or both ends by the 19S regulatory particle (RP/PA700). The RP/PA700 complex is composed of at least 17 different subunits in two subcomplexes, the base and the lid, which form the portions proximal and distal to the 20S proteolytic core, respectively.

Its subcellular location is the cytoplasm. It is found in the nucleus. The 26S proteasome is involved in the ATP-dependent degradation of ubiquitinated proteins. The regulatory (or ATPase) complex confers ATP dependency and substrate specificity to the 26S complex. This chain is 26S proteasome regulatory subunit 7 homolog B (RPT1B), found in Arabidopsis thaliana (Mouse-ear cress).